The following is a 73-amino-acid chain: UPF0435 protein BH2488 (73 aa).

It belongs to the UPF0435 family.

This Halalkalibacterium halodurans (strain ATCC BAA-125 / DSM 18197 / FERM 7344 / JCM 9153 / C-125) (Bacillus halodurans) protein is UPF0435 protein BH2488.